Consider the following 132-residue polypeptide: Large ribosomal subunit protein uL24 (132 aa).

Belongs to the universal ribosomal protein uL24 family. In terms of assembly, part of the 50S ribosomal subunit.

One of two assembly initiator proteins, it binds directly to the 5'-end of the 23S rRNA, where it nucleates assembly of the 50S subunit. In terms of biological role, one of the proteins that surrounds the polypeptide exit tunnel on the outside of the subunit. In Aquifex aeolicus (strain VF5), this protein is Large ribosomal subunit protein uL24.